Here is a 62-residue protein sequence, read N- to C-terminus: Disintegrin schistatin-like subunit A (62 aa).

Positions 1–62 constitute a Disintegrin domain; sequence SVNPCCDPVI…TTDCPRNRYN (62 aa). 4 disulfide bridges follow: Cys-5–Cys-28, Cys-19–Cys-25, Cys-24–Cys-49, and Cys-37–Cys-56. Positions 41–43 match the Cell attachment site motif; the sequence is RGD.

The protein belongs to the disintegrin family. Dimeric disintegrin subfamily. Heterodimer with subunit B; disulfide-linked. Expressed by the venom gland.

The protein localises to the secreted. Its function is as follows. May bind to both alpha-IIb/beta-3 (ITGA2B/ITGB3) and alpha-V/beta-3 (ITGAV/ITGB3) integrins, and may inhibit platelet aggregation. The sequence is that of Disintegrin schistatin-like subunit A from Echis carinatus (Saw-scaled viper).